The sequence spans 194 residues: Peroxiredoxin 2 (194 aa).

Positions 2–160 (PQLQKPAPAF…TLRLVQAFQY (159 aa)) constitute a Thioredoxin domain. The active-site Cysteine sulfenic acid (-SOH) intermediate is Cys-47. Thr-193 bears the Phosphothreonine mark. Ser-194 carries the phosphoserine modification.

This sequence belongs to the peroxiredoxin family. AhpC/Prx1 subfamily. As to quaternary structure, homodimer; disulfide-linked, upon oxidation. 5 homodimers assemble to form a ring-like decamer. Also exists as a monomer. In terms of processing, the enzyme can be inactivated by further oxidation of the cysteine sulfenic acid (C(P)-SOH) to sulphinic acid (C(P)-SO2H) instead of its condensation to a disulfide bond. It can be reactivated by forming a transient disulfide bond with sulfiredoxin SRXN1, which reduces the cysteine sulfinic acid in an ATP- and Mg-dependent manner. Post-translationally, conjugated to URM1, a ubiquitin-like protein. Detected in the head and body (at protein level).

Its subcellular location is the cytoplasm. It catalyses the reaction a hydroperoxide + [thioredoxin]-dithiol = an alcohol + [thioredoxin]-disulfide + H2O. Functionally, thiol-specific peroxidase that catalyzes the reduction of hydrogen peroxide and organic hydroperoxides to water and alcohols, respectively. Plays a role in cell protection against oxidative stress by detoxifying peroxides and as sensor of hydrogen peroxide-mediated signaling events. Might participate in the signaling cascades of growth factors and tumor necrosis factor-alpha by regulating the intracellular concentrations of H(2)O(2). Reduces an intramolecular disulfide bond in GDPD5 that gates the ability to GDPD5 to drive postmitotic motor neuron differentiation. This Drosophila melanogaster (Fruit fly) protein is Peroxiredoxin 2.